Reading from the N-terminus, the 936-residue chain is MTSSMEEDDSISPESISLDTLASIRSLIINADTSDSVISSVFDFLTGLLSRGNSAILHHVLKLLSDLAFRRKELAPQIFDSILSNLLRLHNTVAEASHERAAVESLAVLASLSERTPSIAAALSKIDDEVFASICLGAPISSRLWLLRNADRFNVPSSVLFTLFLGFSKDPYPYIRKVALDGLINICNAGDFNHTHAVEGCYTRAVELLSDAEDSVRSSAVRAVSVWGKVMIASKEEEMNRRDCTDAVFLQLCSVVRDMSVDVRVEVFKAFGIIGTASESIILQTLSKKVLGAGKGKKPQNLLSNGSADVSSAAGVYIHGFEDEFYEVREAAVDSFHSLSVNSIKFPDEAVYLLMDMLYDDYMVVRLKALKALHHIADLGNLKIQETYMPAFLDAIVDTSENIRVEARNILKLAKLPDLKLVNKCIDGVLKSLEMYPQDEPDILSALFHFGQNHTNFLVSMVKRFSEKLGTASGSKAEFNSRQLSASLTLIISAPLSNKQSITSIPPLAFSYSLAMLGKFSSGLHDMMDQDMLLAYLTHCAILSSSSGTEFNKGDVFFHAYRDSNADLAGNPVLLPGKDIPAESKYMACKAELEIGNQALKFVNHILLKIKAAWLLSQSGCSKEALRALRACKQELATLTADSSISKGTLDFICQYVHVIELLVQVWPHFNYSRHISTCSSVEVELLMEEVEIKLMEIRCRFTGLSTEESLVLELVIFGCLLRLYKFEICCRLSCMEKLSSTISQLELHHEQQCTKPSDFLTETKKSLEEFGSSDDINSCRLLDLIKIFKCFSPEQFTFSVNLQCVSAEVEVPGNGPYSPISFVPGLPVAIPCEITLLNVPRDTCLWLRISRNDETCQFVYLDPNLYNGNGREKRFMFTAVTYMTPRAVVFTLRVSIGIECLFEDICYRKQRHGPKHPVAYLCKEREIHLSLVSRT.

As to quaternary structure, interacts with SHR, MGP, SCR, JKD, CPC, TMO7 and AGL21, but not with LFY or STM.

It is found in the nucleus. The protein localises to the endosome. Its subcellular location is the cytoplasm. It localises to the cell cortex. Its function is as follows. Intracellular shuttle that promotes movement of SHR from the stele into the endodermis. Required for SHR association to endosomes and localization, and for intercellular movement of SHR. The sequence is that of Protein SIEL from Arabidopsis thaliana (Mouse-ear cress).